The sequence spans 316 residues: Protein U25 (316 aa).

It belongs to the herpesviridae US22 family.

The sequence is that of Protein U25 (U25) from Human herpesvirus 6B (HHV-6 variant B).